The primary structure comprises 284 residues: 4-diphosphocytidyl-2-C-methyl-D-erythritol kinase (284 aa).

Residue lysine 14 is part of the active site. 98–108 (PMGGGLGGGSS) serves as a coordination point for ATP. Aspartate 140 is an active-site residue.

It belongs to the GHMP kinase family. IspE subfamily.

The catalysed reaction is 4-CDP-2-C-methyl-D-erythritol + ATP = 4-CDP-2-C-methyl-D-erythritol 2-phosphate + ADP + H(+). It participates in isoprenoid biosynthesis; isopentenyl diphosphate biosynthesis via DXP pathway; isopentenyl diphosphate from 1-deoxy-D-xylulose 5-phosphate: step 3/6. Functionally, catalyzes the phosphorylation of the position 2 hydroxy group of 4-diphosphocytidyl-2C-methyl-D-erythritol. The sequence is that of 4-diphosphocytidyl-2-C-methyl-D-erythritol kinase from Shewanella denitrificans (strain OS217 / ATCC BAA-1090 / DSM 15013).